We begin with the raw amino-acid sequence, 347 residues long: Tsukushi (347 aa).

An N-terminal signal peptide occupies residues 1-19 (MASLLCLFFSLLGLAAIGA). Residues 20–61 (VKNCHPQCRCEVETFGLFDSFSLTKVDCSRIGPGNTPVPIPL) enclose the LRRNT domain. 10 LRR repeats span residues 62 to 83 (DTSH…MLSG), 88 to 109 (TLVS…AFSK), 112 to 133 (YLET…CFTG), 135 to 156 (PLVE…LFTT), 160 to 175 (DLPI…LTSI), 185 to 205 (YIKS…LNGI), 206 to 227 (PLQY…AFDS), 230 to 252 (ELVH…AFRS), 255 to 277 (NLQA…VFSG), and 280 to 301 (SLQE…VFMQ). An N-linked (GlcNAc...) asparagine glycan is attached at Asn285.

Forms a ternary complex with chordin/CHRD and BMP4.

It localises to the secreted. Functionally, contributes to various developmental events through its interactions with multiple signaling pathways. Dorsalizing factor which functions as an inhibitor of bone morphogenetic proteins during gastrulation. In Danio rerio (Zebrafish), this protein is Tsukushi (tsku).